The chain runs to 882 residues: Alanine--tRNA ligase (882 aa).

The Zn(2+) site is built by histidine 568, histidine 572, cysteine 670, and histidine 674.

This sequence belongs to the class-II aminoacyl-tRNA synthetase family. Zn(2+) is required as a cofactor.

The protein localises to the cytoplasm. It catalyses the reaction tRNA(Ala) + L-alanine + ATP = L-alanyl-tRNA(Ala) + AMP + diphosphate. Catalyzes the attachment of alanine to tRNA(Ala) in a two-step reaction: alanine is first activated by ATP to form Ala-AMP and then transferred to the acceptor end of tRNA(Ala). Also edits incorrectly charged Ser-tRNA(Ala) and Gly-tRNA(Ala) via its editing domain. The chain is Alanine--tRNA ligase from Lactobacillus johnsonii (strain CNCM I-12250 / La1 / NCC 533).